The sequence spans 423 residues: Serine--tRNA ligase (423 aa).

230–232 (TAE) is a binding site for L-serine. An ATP-binding site is contributed by 261–263 (RSE). Glutamate 284 contributes to the L-serine binding site. Position 348 to 351 (348 to 351 (EISS)) interacts with ATP. Serine 384 serves as a coordination point for L-serine.

The protein belongs to the class-II aminoacyl-tRNA synthetase family. Type-1 seryl-tRNA synthetase subfamily. In terms of assembly, homodimer. The tRNA molecule binds across the dimer.

It is found in the cytoplasm. It catalyses the reaction tRNA(Ser) + L-serine + ATP = L-seryl-tRNA(Ser) + AMP + diphosphate + H(+). It carries out the reaction tRNA(Sec) + L-serine + ATP = L-seryl-tRNA(Sec) + AMP + diphosphate + H(+). Its pathway is aminoacyl-tRNA biosynthesis; selenocysteinyl-tRNA(Sec) biosynthesis; L-seryl-tRNA(Sec) from L-serine and tRNA(Sec): step 1/1. Its function is as follows. Catalyzes the attachment of serine to tRNA(Ser). Is also able to aminoacylate tRNA(Sec) with serine, to form the misacylated tRNA L-seryl-tRNA(Sec), which will be further converted into selenocysteinyl-tRNA(Sec). The polypeptide is Serine--tRNA ligase (Syntrophobacter fumaroxidans (strain DSM 10017 / MPOB)).